Consider the following 207-residue polypeptide: NAD--protein ADP-ribosyltransferase modB (207 aa).

Arg73 contributes to the NAD(+) binding site. The active site involves Glu173.

It belongs to the Tevenvirinae NAD--protein ADP-ribosyltransferase modA family.

The protein localises to the virion. It carries out the reaction L-arginyl-[protein] + NAD(+) = N(omega)-(ADP-D-ribosyl)-L-arginyl-[protein] + nicotinamide + H(+). In terms of biological role, ADP-ribosyltransferase that regulates transcription by ADP-ribosylation of host ribosomal protein S1. Additional identified targets include proteins involved in either translation or cellular metabolism such as elongation factor-Tu or trigger factor. Also reprograms the host's gene-expression system by RNAylating host ribosomal protein S1. ModB can attach NAD-capped RNAs to target proteins post-transcriptionally resulting in covalent RNA-protein conjugates. The sequence is that of NAD--protein ADP-ribosyltransferase modB from Enterobacteria phage T4 (Bacteriophage T4).